The chain runs to 616 residues: DEAD-box ATP-dependent RNA helicase 53, mitochondrial (616 aa).

A mitochondrion-targeting transit peptide spans 1 to 81; the sequence is MITTVLRRSL…DFRASMVSQA (81 aa). Positions 104–132 match the Q motif motif; the sequence is LAISELGISPEIVKALSSKGIEKLFPIQK. The region spanning 135–309 is the Helicase ATP-binding domain; that stretch reads LEPAMEGRDM…KKYLNNPLTV (175 aa). 148 to 155 is a binding site for ATP; the sequence is ARTGTGKT. Residues 257–260 carry the DEAD box motif; that stretch reads DEAD. A Helicase C-terminal domain is found at 338-482; the sequence is IIGPLVTEHA…ELPSIAVERG (145 aa). Positions 489 to 616 are disordered; sequence GIGSRSGGSF…FGSNDGKRSY (128 aa). 2 stretches are compositionally biased toward gly residues: residues 492–501 and 508–531; these read SRSGGSFGGG and SFGG…GRSG. Low complexity-rich tracts occupy residues 532 to 568 and 578 to 587; these read GSSN…SGGR and GSSNNRSSGF.

It belongs to the DEAD box helicase family. DDX21/DDX50 subfamily.

The protein resides in the mitochondrion. It catalyses the reaction ATP + H2O = ADP + phosphate + H(+). The polypeptide is DEAD-box ATP-dependent RNA helicase 53, mitochondrial (RH53) (Arabidopsis thaliana (Mouse-ear cress)).